Reading from the N-terminus, the 479-residue chain is Adenosylhomocysteinase (479 aa).

Positions 66, 142, and 203 each coordinate substrate. NAD(+) is bound at residue 204–206 (TTT). Residues lysine 233 and aspartate 237 each contribute to the substrate site. Residues asparagine 238, 267-272 (GYGDVG), glutamate 290, asparagine 325, 346-348 (IGH), and asparagine 394 contribute to the NAD(+) site.

This sequence belongs to the adenosylhomocysteinase family. The cofactor is NAD(+).

It localises to the cytoplasm. It catalyses the reaction S-adenosyl-L-homocysteine + H2O = L-homocysteine + adenosine. Its pathway is amino-acid biosynthesis; L-homocysteine biosynthesis; L-homocysteine from S-adenosyl-L-homocysteine: step 1/1. Functionally, may play a key role in the regulation of the intracellular concentration of adenosylhomocysteine. The polypeptide is Adenosylhomocysteinase (Oleidesulfovibrio alaskensis (strain ATCC BAA-1058 / DSM 17464 / G20) (Desulfovibrio alaskensis)).